The following is a 374-amino-acid chain: Methylthioribose-1-phosphate isomerase (374 aa).

Residue Asp251 is the Proton donor of the active site.

This sequence belongs to the eIF-2B alpha/beta/delta subunits family. MtnA subfamily.

The protein resides in the cytoplasm. The protein localises to the nucleus. It catalyses the reaction 5-(methylsulfanyl)-alpha-D-ribose 1-phosphate = 5-(methylsulfanyl)-D-ribulose 1-phosphate. Its pathway is amino-acid biosynthesis; L-methionine biosynthesis via salvage pathway; L-methionine from S-methyl-5-thio-alpha-D-ribose 1-phosphate: step 1/6. In terms of biological role, catalyzes the interconversion of methylthioribose-1-phosphate (MTR-1-P) into methylthioribulose-1-phosphate (MTRu-1-P). The chain is Methylthioribose-1-phosphate isomerase (IDI2) from Oryza sativa subsp. japonica (Rice).